A 118-amino-acid polypeptide reads, in one-letter code: Basic phospholipase A2 PA-9C (118 aa).

7 disulfides stabilise this stretch: Cys11/Cys71, Cys27/Cys117, Cys29/Cys45, Cys44/Cys98, Cys51/Cys91, Cys60/Cys84, and Cys78/Cys89. Ca(2+) is bound by residues Tyr28, Gly30, and Gly32. His48 is a catalytic residue. Asp49 provides a ligand contact to Ca(2+). The active site involves Asp92.

Belongs to the phospholipase A2 family. Group I subfamily. D49 sub-subfamily. The cofactor is Ca(2+). As to expression, expressed by the venom gland.

The protein resides in the secreted. It catalyses the reaction a 1,2-diacyl-sn-glycero-3-phosphocholine + H2O = a 1-acyl-sn-glycero-3-phosphocholine + a fatty acid + H(+). In terms of biological role, PLA2 catalyzes the calcium-dependent hydrolysis of the 2-acyl groups in 3-sn-phosphoglycerides. This chain is Basic phospholipase A2 PA-9C, found in Pseudechis australis (Mulga snake).